The primary structure comprises 74 residues: Pelophylaxin-2 (74 aa).

The signal sequence occupies residues 1–22 (MFTMKKSLLFFFFLGTIALSLC). Residues 23-42 (EEERGADEEENGAEITDEEV) constitute a propeptide that is removed on maturation. Cysteine 68 and cysteine 74 are joined by a disulfide.

As to expression, expressed by the skin glands.

The protein resides in the secreted. Functionally, antimicrobial peptide. This is Pelophylaxin-2 from Pelophylax fukienensis (Fukien gold-striped pond frog).